The chain runs to 422 residues: 4-hydroxy-3-methylbut-2-en-1-yl diphosphate synthase (flavodoxin) (422 aa).

Positions 316, 319, 362, and 369 each coordinate [4Fe-4S] cluster.

It belongs to the IspG family. The cofactor is [4Fe-4S] cluster.

The enzyme catalyses (2E)-4-hydroxy-3-methylbut-2-enyl diphosphate + oxidized [flavodoxin] + H2O + 2 H(+) = 2-C-methyl-D-erythritol 2,4-cyclic diphosphate + reduced [flavodoxin]. It functions in the pathway isoprenoid biosynthesis; isopentenyl diphosphate biosynthesis via DXP pathway; isopentenyl diphosphate from 1-deoxy-D-xylulose 5-phosphate: step 5/6. Functionally, converts 2C-methyl-D-erythritol 2,4-cyclodiphosphate (ME-2,4cPP) into 1-hydroxy-2-methyl-2-(E)-butenyl 4-diphosphate. The protein is 4-hydroxy-3-methylbut-2-en-1-yl diphosphate synthase (flavodoxin) of Ehrlichia canis (strain Jake).